We begin with the raw amino-acid sequence, 793 residues long: Serine/threonine-protein kinase MARK1 (793 aa).

Positions Met-1–Ile-40 are disordered. At Thr-5 the chain carries Phosphothreonine. The 252-residue stretch at Tyr-60–Met-311 folds into the Protein kinase domain. ATP is bound by residues Ile-66–Val-74 and Lys-89. Asp-182 acts as the Proton acceptor in catalysis. Thr-208 bears the Phosphothreonine mark. Thr-215 carries the post-translational modification Phosphothreonine; by LKB1 and TAOK1. Residue Ser-219 is modified to Phosphoserine; by GSK3-beta. Residues Asp-329 to Arg-370 form the UBA domain. 2 disordered regions span residues Gly-377–Met-499 and Leu-517–Ser-697. A compositionally biased stretch (polar residues) spans Ser-380 to Ser-403. Ser-382, Ser-390, Ser-393, Ser-403, Ser-423, and Ser-444 each carry phosphoserine. Residues Ser-447–Arg-459 show a composition bias toward basic and acidic residues. The segment covering Gly-462–Thr-473 has biased composition (polar residues). Phosphoserine is present on Ser-475. The span at Ala-487–Met-499 shows a compositional bias: polar residues. Low complexity-rich tracts occupy residues Ser-523–Ala-547 and Pro-585–Pro-599. Residue Ser-588 is modified to Phosphoserine. Thr-613 is subject to Phosphothreonine; by PKC/PRKCZ. Residues Gly-647–Thr-657 show a composition bias toward polar residues. Basic and acidic residues-rich tracts occupy residues Val-661 to Thr-676 and Glu-683 to Pro-695. A Phosphoserine modification is found at Ser-666. The KA1 domain occupies Asp-744–Leu-793.

This sequence belongs to the protein kinase superfamily. CAMK Ser/Thr protein kinase family. SNF1 subfamily. Interacts with MAPT/TAU. The cofactor is Mg(2+). In terms of processing, phosphorylation at Thr-613 by PRKCZ/aPKC in polarized epithelial cells inhibits the kinase activity. Phosphorylated at Thr-215 by STK11/LKB1 in complex with STE20-related adapter-alpha (STRADA) pseudo kinase and CAB39. Phosphorylation at Thr-215 by TAOK1 activates the kinase activity, leading to phosphorylation and detachment of MAPT/TAU from microtubules. Phosphorylation at Ser-219 by GSK3-beta (GSK3B) inhibits the kinase activity. In terms of tissue distribution, highly expressed in brain and spleen and at lower levels in kidney and skeletal muscle.

Its subcellular location is the cell membrane. It is found in the cytoplasm. The protein resides in the cytoskeleton. The protein localises to the cell projection. It localises to the dendrite. It carries out the reaction L-seryl-[protein] + ATP = O-phospho-L-seryl-[protein] + ADP + H(+). It catalyses the reaction L-threonyl-[protein] + ATP = O-phospho-L-threonyl-[protein] + ADP + H(+). The enzyme catalyses L-seryl-[tau protein] + ATP = O-phospho-L-seryl-[tau protein] + ADP + H(+). The catalysed reaction is L-threonyl-[tau protein] + ATP = O-phospho-L-threonyl-[tau protein] + ADP + H(+). Activated by phosphorylation on Thr-215. Inhibited by phosphorylation at Ser-219. Serine/threonine-protein kinase. Involved in cell polarity and microtubule dynamics regulation. Phosphorylates DCX, MAP2 and MAP4. Phosphorylates the microtubule-associated protein MAPT/TAU. Involved in cell polarity by phosphorylating the microtubule-associated proteins MAP2, MAP4 and MAPT/TAU at KXGS motifs, causing detachment from microtubules, and their disassembly. Involved in the regulation of neuronal migration through its dual activities in regulating cellular polarity and microtubule dynamics, possibly by phosphorylating and regulating DCX. Also acts as a positive regulator of the Wnt signaling pathway, probably by mediating phosphorylation of dishevelled proteins (DVL1, DVL2 and/or DVL3). The chain is Serine/threonine-protein kinase MARK1 from Rattus norvegicus (Rat).